Reading from the N-terminus, the 290-residue chain is uncharacterized protein (290 aa).

The AB hydrolase-1 domain maps to 30 to 274 (PTILLLHGFP…YDTGHFALET (245 aa)). Residue H269 is part of the active site.

This sequence belongs to the DmpD/TodF/XylF esterase family.

This is an uncharacterized protein from Saccharomyces cerevisiae (strain ATCC 204508 / S288c) (Baker's yeast).